The primary structure comprises 86 residues: Putative membrane protein insertion efficiency factor (86 aa).

The protein belongs to the UPF0161 family.

The protein resides in the cell inner membrane. Its function is as follows. Could be involved in insertion of integral membrane proteins into the membrane. This Pseudomonas aeruginosa (strain UCBPP-PA14) protein is Putative membrane protein insertion efficiency factor.